The chain runs to 95 residues: Small ribosomal subunit protein bS20 (95 aa).

Belongs to the bacterial ribosomal protein bS20 family.

In terms of biological role, binds directly to 16S ribosomal RNA. The polypeptide is Small ribosomal subunit protein bS20 (Fervidobacterium nodosum (strain ATCC 35602 / DSM 5306 / Rt17-B1)).